The sequence spans 1372 residues: DNA-directed RNA polymerase subunit beta' (1372 aa).

Zn(2+)-binding residues include C69, C71, C84, and C87. Positions 460, 462, and 464 each coordinate Mg(2+). Zn(2+)-binding residues include C808, C882, C889, and C892.

Belongs to the RNA polymerase beta' chain family. In terms of assembly, the RNAP catalytic core consists of 2 alpha, 1 beta, 1 beta' and 1 omega subunit. When a sigma factor is associated with the core the holoenzyme is formed, which can initiate transcription. It depends on Mg(2+) as a cofactor. Zn(2+) is required as a cofactor.

It catalyses the reaction RNA(n) + a ribonucleoside 5'-triphosphate = RNA(n+1) + diphosphate. DNA-dependent RNA polymerase catalyzes the transcription of DNA into RNA using the four ribonucleoside triphosphates as substrates. In Rickettsia felis (strain ATCC VR-1525 / URRWXCal2) (Rickettsia azadi), this protein is DNA-directed RNA polymerase subunit beta'.